We begin with the raw amino-acid sequence, 488 residues long: ATP synthase subunit beta (488 aa).

Residue 164-171 participates in ATP binding; the sequence is GGAGVGKT.

It belongs to the ATPase alpha/beta chains family. As to quaternary structure, F-type ATPases have 2 components, CF(1) - the catalytic core - and CF(0) - the membrane proton channel. CF(1) has five subunits: alpha(3), beta(3), gamma(1), delta(1), epsilon(1). CF(0) has four main subunits: a(1), b(1), b'(1) and c(9-12).

It localises to the cellular thylakoid membrane. It catalyses the reaction ATP + H2O + 4 H(+)(in) = ADP + phosphate + 5 H(+)(out). Functionally, produces ATP from ADP in the presence of a proton gradient across the membrane. The catalytic sites are hosted primarily by the beta subunits. The chain is ATP synthase subunit beta from Prochlorococcus marinus (strain MIT 9313).